A 451-amino-acid chain; its full sequence is D-inositol 3-phosphate glycosyltransferase (451 aa).

His-21 contributes to the 1D-myo-inositol 3-phosphate binding site. UDP-N-acetyl-alpha-D-glucosamine contacts are provided by residues 27–28 (QP) and Gly-35. 1D-myo-inositol 3-phosphate is bound by residues 32–37 (DAGGMN), Lys-90, Tyr-123, Thr-147, and Arg-167. 3 residues coordinate UDP-N-acetyl-alpha-D-glucosamine: Arg-241, Lys-246, and Gln-305. 3 residues coordinate Mg(2+): Tyr-314, Arg-315, and Ala-317. Glu-327 and Glu-335 together coordinate UDP-N-acetyl-alpha-D-glucosamine. Thr-341 contributes to the Mg(2+) binding site.

Belongs to the glycosyltransferase group 1 family. MshA subfamily. In terms of assembly, homodimer.

It catalyses the reaction 1D-myo-inositol 3-phosphate + UDP-N-acetyl-alpha-D-glucosamine = 1D-myo-inositol 2-acetamido-2-deoxy-alpha-D-glucopyranoside 3-phosphate + UDP + H(+). Catalyzes the transfer of a N-acetyl-glucosamine moiety to 1D-myo-inositol 3-phosphate to produce 1D-myo-inositol 2-acetamido-2-deoxy-glucopyranoside 3-phosphate in the mycothiol biosynthesis pathway. This Nocardia farcinica (strain IFM 10152) protein is D-inositol 3-phosphate glycosyltransferase.